The chain runs to 431 residues: Gamma-glutamyl phosphate reductase (431 aa).

The protein belongs to the gamma-glutamyl phosphate reductase family.

The protein localises to the cytoplasm. The enzyme catalyses L-glutamate 5-semialdehyde + phosphate + NADP(+) = L-glutamyl 5-phosphate + NADPH + H(+). Its pathway is amino-acid biosynthesis; L-proline biosynthesis; L-glutamate 5-semialdehyde from L-glutamate: step 2/2. Catalyzes the NADPH-dependent reduction of L-glutamate 5-phosphate into L-glutamate 5-semialdehyde and phosphate. The product spontaneously undergoes cyclization to form 1-pyrroline-5-carboxylate. The chain is Gamma-glutamyl phosphate reductase from Acaryochloris marina (strain MBIC 11017).